Reading from the N-terminus, the 63-residue chain is Small ribosomal subunit protein bS21 (63 aa).

It belongs to the bacterial ribosomal protein bS21 family.

In Porphyromonas gingivalis (strain ATCC BAA-308 / W83), this protein is Small ribosomal subunit protein bS21.